Consider the following 93-residue polypeptide: Small ribosomal subunit protein uS15 (93 aa).

The protein belongs to the universal ribosomal protein uS15 family. In terms of assembly, part of the 30S ribosomal subunit. Forms a bridge to the 50S subunit in the 70S ribosome, contacting the 23S rRNA.

In terms of biological role, one of the primary rRNA binding proteins, it binds directly to 16S rRNA where it helps nucleate assembly of the platform of the 30S subunit by binding and bridging several RNA helices of the 16S rRNA. Functionally, forms an intersubunit bridge (bridge B4) with the 23S rRNA of the 50S subunit in the ribosome. This is Small ribosomal subunit protein uS15 from Anaplasma phagocytophilum (strain HZ).